The primary structure comprises 156 residues: Small ribosomal subunit protein uS7 (156 aa).

This sequence belongs to the universal ribosomal protein uS7 family. As to quaternary structure, part of the 30S ribosomal subunit. Contacts proteins S9 and S11.

Functionally, one of the primary rRNA binding proteins, it binds directly to 16S rRNA where it nucleates assembly of the head domain of the 30S subunit. Is located at the subunit interface close to the decoding center, probably blocks exit of the E-site tRNA. The chain is Small ribosomal subunit protein uS7 from Salinispora tropica (strain ATCC BAA-916 / DSM 44818 / JCM 13857 / NBRC 105044 / CNB-440).